The primary structure comprises 365 residues: Bifunctional chorismate mutase/prephenate dehydratase (365 aa).

The 96-residue stretch at 1–96 (MADQDQLKAL…SCLALEQPLK (96 aa)) folds into the Chorismate mutase domain. Arg-11, Arg-28, Lys-39, and Glu-57 together coordinate substrate. The 176-residue stretch at 97 to 272 (VAYLGPEGTF…NSTRFLIIGN (176 aa)) folds into the Prephenate dehydratase domain. The 78-residue stretch at 284–361 (SIIVSMRNKP…VALKVLGSYP (78 aa)) folds into the ACT domain.

Its subcellular location is the cytoplasm. It catalyses the reaction chorismate = prephenate. It carries out the reaction prephenate + H(+) = 3-phenylpyruvate + CO2 + H2O. It functions in the pathway amino-acid biosynthesis; L-phenylalanine biosynthesis; phenylpyruvate from prephenate: step 1/1. Its pathway is metabolic intermediate biosynthesis; prephenate biosynthesis; prephenate from chorismate: step 1/1. In terms of biological role, catalyzes the Claisen rearrangement of chorismate to prephenate and the decarboxylation/dehydration of prephenate to phenylpyruvate. The sequence is that of Bifunctional chorismate mutase/prephenate dehydratase (pheA) from Pseudomonas aeruginosa (strain ATCC 15692 / DSM 22644 / CIP 104116 / JCM 14847 / LMG 12228 / 1C / PRS 101 / PAO1).